A 305-amino-acid polypeptide reads, in one-letter code: UDP-3-O-acyl-N-acetylglucosamine deacetylase (305 aa).

Residues His-79, His-238, and Asp-242 each contribute to the Zn(2+) site. The active-site Proton donor is the His-265.

This sequence belongs to the LpxC family. Zn(2+) serves as cofactor.

The enzyme catalyses a UDP-3-O-[(3R)-3-hydroxyacyl]-N-acetyl-alpha-D-glucosamine + H2O = a UDP-3-O-[(3R)-3-hydroxyacyl]-alpha-D-glucosamine + acetate. It functions in the pathway glycolipid biosynthesis; lipid IV(A) biosynthesis; lipid IV(A) from (3R)-3-hydroxytetradecanoyl-[acyl-carrier-protein] and UDP-N-acetyl-alpha-D-glucosamine: step 2/6. In terms of biological role, catalyzes the hydrolysis of UDP-3-O-myristoyl-N-acetylglucosamine to form UDP-3-O-myristoylglucosamine and acetate, the committed step in lipid A biosynthesis. The polypeptide is UDP-3-O-acyl-N-acetylglucosamine deacetylase (Vibrio cholerae serotype O1 (strain ATCC 39541 / Classical Ogawa 395 / O395)).